Here is a 103-residue protein sequence, read N- to C-terminus: Large ribosomal subunit protein bL21 (103 aa).

The protein belongs to the bacterial ribosomal protein bL21 family. In terms of assembly, part of the 50S ribosomal subunit. Contacts protein L20.

Functionally, this protein binds to 23S rRNA in the presence of protein L20. The sequence is that of Large ribosomal subunit protein bL21 from Clostridium kluyveri (strain NBRC 12016).